The sequence spans 302 residues: UDP-N-acetylenolpyruvoylglucosamine reductase (302 aa).

Residues 30-196 form the FAD-binding PCMH-type domain; it reads IGGPADLFVE…IAATLEMKKG (167 aa). Residue R174 is part of the active site. Residue S225 is the Proton donor of the active site. E295 is an active-site residue.

Belongs to the MurB family. FAD is required as a cofactor.

The protein resides in the cytoplasm. It carries out the reaction UDP-N-acetyl-alpha-D-muramate + NADP(+) = UDP-N-acetyl-3-O-(1-carboxyvinyl)-alpha-D-glucosamine + NADPH + H(+). It functions in the pathway cell wall biogenesis; peptidoglycan biosynthesis. Cell wall formation. The polypeptide is UDP-N-acetylenolpyruvoylglucosamine reductase (Anoxybacillus flavithermus (strain DSM 21510 / WK1)).